Here is a 112-residue protein sequence, read N- to C-terminus: Putative pterin-4-alpha-carbinolamine dehydratase (112 aa).

The protein belongs to the pterin-4-alpha-carbinolamine dehydratase family.

The enzyme catalyses (4aS,6R)-4a-hydroxy-L-erythro-5,6,7,8-tetrahydrobiopterin = (6R)-L-erythro-6,7-dihydrobiopterin + H2O. The polypeptide is Putative pterin-4-alpha-carbinolamine dehydratase (Shewanella pealeana (strain ATCC 700345 / ANG-SQ1)).